The following is a 237-amino-acid chain: Concanavalin V (237 aa).

Mn(2+)-binding residues include Glu8 and Asp10. 4 residues coordinate Ca(2+): Asp10, Tyr12, Asn14, and Asp19. Asn14 is a binding site for a carbohydrate. Asp19 and His24 together coordinate Mn(2+). A carbohydrate-binding positions include Gly70, 98-100 (GLY), Asp208, and Arg228.

This sequence belongs to the leguminous lectin family. As to quaternary structure, homotetramer. Concanavalin A-like lectins of the Diocleinae subtribe undergo proteolytic processing referred to as circular permutation. The propeptide is split into an N-terminal and a C-terminal part, the gamma and beta chain, respectively. These are then religated in beta-gamma order to form the mature alpha chain. The beta and gamma chains can often be detected in cell extracts. Residues 1-118 of the mature chain, as displayed here, probably constitute the beta chain in the propeptide, residues 119-237 the gamma chain.

Functionally, D-mannose/D-glucose-binding lectin which binds alpha-methyl-D-mannoside, D-mannose and D-glucose in that order. Also binds to serum fetuin and ovalbumin. Has hemagglutinating activity towards rabbit erythrocytes. Is not toxic towards larvae of the brine shrimp Artemia. Induces relaxation in rat endothelized aorta. Shows a transient edematogenic effect in rat. In Canavalia cathartica (Jackbean), this protein is Concanavalin V.